Consider the following 456-residue polypeptide: Keratin, type I cuticular Ha8 (456 aa).

The interval 1-104 is head; the sequence is MTSSYSSSSC…YGENTLNGHE (104 aa). Residues 104–415 enclose the IF rod domain; the sequence is EKETMQFLND…NLLESEDCKL (312 aa). A coil 1A region spans residues 105–139; the sequence is KETMQFLNDRLANYLEKVRQLEQENAELEATLLER. The linker 1 stretch occupies residues 140 to 150; the sequence is SKCHESTVCPD. The tract at residues 151-251 is coil 1B; it reads YQSYFHTIEE…HEQEVKILRS (101 aa). The linker 12 stretch occupies residues 252–267; it reads QLGEKLRIELDIEPTI. Residues 268–411 form a coil 2 region; it reads DLNRVLGEMR…ATYRNLLESE (144 aa). Positions 412 to 456 are tail; the sequence is DCKLPCNPCSTSPSCVTAPCAPRPSCGPCTTCGPTCGASTTGSRF.

Belongs to the intermediate filament family.

In Homo sapiens (Human), this protein is Keratin, type I cuticular Ha8 (KRT38).